A 113-amino-acid chain; its full sequence is uncharacterized protein (113 aa).

Positions 31–113 (SNNNNNNNNN…YSPTKFNLQY (83 aa)) are disordered. Low complexity predominate over residues 32-98 (NNNNNNNNNN…NNNNNNNNNN (67 aa)). The segment covering 99–113 (SSSFEYSPTKFNLQY) has biased composition (polar residues).

This is an uncharacterized protein from Dictyostelium discoideum (Social amoeba).